The sequence spans 466 residues: ATP synthase subunit beta (466 aa).

An ATP-binding site is contributed by 156–163 (GGAGVGKT).

Belongs to the ATPase alpha/beta chains family. F-type ATPases have 2 components, CF(1) - the catalytic core - and CF(0) - the membrane proton channel. CF(1) has five subunits: alpha(3), beta(3), gamma(1), delta(1), epsilon(1). CF(0) has three main subunits: a(1), b(2) and c(9-12). The alpha and beta chains form an alternating ring which encloses part of the gamma chain. CF(1) is attached to CF(0) by a central stalk formed by the gamma and epsilon chains, while a peripheral stalk is formed by the delta and b chains.

It localises to the cell membrane. The catalysed reaction is ATP + H2O + 4 H(+)(in) = ADP + phosphate + 5 H(+)(out). Produces ATP from ADP in the presence of a proton gradient across the membrane. The catalytic sites are hosted primarily by the beta subunits. This is ATP synthase subunit beta from Buchnera aphidicola subsp. Schizaphis graminum (strain Sg).